The primary structure comprises 458 residues: Divalent metal cation transporter MntH (458 aa).

Helical transmembrane passes span glycine 38–methionine 58, leucine 86–leucine 106, glycine 119–isoleucine 139, isoleucine 151–methionine 171, alanine 180–alanine 200, methionine 223–histidine 243, leucine 275–glycine 295, isoleucine 315–serine 335, glycine 370–valine 390, isoleucine 395–phenylalanine 415, and tryptophan 436–leucine 456.

It belongs to the NRAMP family.

It is found in the cell membrane. H(+)-stimulated, divalent metal cation uptake system. This chain is Divalent metal cation transporter MntH, found in Latilactobacillus sakei subsp. sakei (strain 23K) (Lactobacillus sakei subsp. sakei).